The following is a 561-amino-acid chain: Oxygen-dependent choline dehydrogenase (561 aa).

D7–E36 is a binding site for FAD. The Proton acceptor role is filled by H474.

It belongs to the GMC oxidoreductase family. The cofactor is FAD.

It catalyses the reaction choline + A = betaine aldehyde + AH2. The enzyme catalyses betaine aldehyde + NAD(+) + H2O = glycine betaine + NADH + 2 H(+). The protein operates within amine and polyamine biosynthesis; betaine biosynthesis via choline pathway; betaine aldehyde from choline (cytochrome c reductase route): step 1/1. In terms of biological role, involved in the biosynthesis of the osmoprotectant glycine betaine. Catalyzes the oxidation of choline to betaine aldehyde and betaine aldehyde to glycine betaine at the same rate. This Paraburkholderia phytofirmans (strain DSM 17436 / LMG 22146 / PsJN) (Burkholderia phytofirmans) protein is Oxygen-dependent choline dehydrogenase.